Consider the following 110-residue polypeptide: UPF0060 membrane protein MT2717 (110 aa).

The next 4 membrane-spanning stretches (helical) occupy residues 6–26 (ILLF…VWQG), 32–52 (GWLW…FATL), 61–81 (VLAA…MALD), and 90–110 (VIGA…PRGH).

Belongs to the UPF0060 family.

It is found in the cell membrane. The chain is UPF0060 membrane protein MT2717 from Mycobacterium tuberculosis (strain CDC 1551 / Oshkosh).